We begin with the raw amino-acid sequence, 297 residues long: Ribosomal RNA small subunit methyltransferase H (297 aa).

S-adenosyl-L-methionine is bound by residues Gly37 to His39, Glu56, Phe87, Asp102, and His109.

This sequence belongs to the methyltransferase superfamily. RsmH family.

Its subcellular location is the cytoplasm. It catalyses the reaction cytidine(1402) in 16S rRNA + S-adenosyl-L-methionine = N(4)-methylcytidine(1402) in 16S rRNA + S-adenosyl-L-homocysteine + H(+). Specifically methylates the N4 position of cytidine in position 1402 (C1402) of 16S rRNA. The chain is Ribosomal RNA small subunit methyltransferase H from Borrelia recurrentis (strain A1).